The chain runs to 197 residues: LexA repressor (197 aa).

The segment at residues 28–47 is a DNA-binding region (H-T-H motif); that stretch reads VREIARRFRITPRGALLHLI. Residues S119 and K156 each act as for autocatalytic cleavage activity in the active site.

This sequence belongs to the peptidase S24 family. As to quaternary structure, homodimer.

It carries out the reaction Hydrolysis of Ala-|-Gly bond in repressor LexA.. In terms of biological role, represses a number of genes involved in the response to DNA damage (SOS response), including recA and lexA. In the presence of single-stranded DNA, RecA interacts with LexA causing an autocatalytic cleavage which disrupts the DNA-binding part of LexA, leading to derepression of the SOS regulon and eventually DNA repair. In Thermotoga petrophila (strain ATCC BAA-488 / DSM 13995 / JCM 10881 / RKU-1), this protein is LexA repressor.